A 406-amino-acid chain; its full sequence is Probable 4-hydroxyphenylpyruvate dioxygenase 2 (406 aa).

VOC domains lie at 22-174 and 205-363; these read GFDH…LINR and EIDH…IFSK. Residues His-208, His-291, and Glu-374 each contribute to the Fe cation site.

Belongs to the 4HPPD family. Fe cation is required as a cofactor.

The enzyme catalyses 3-(4-hydroxyphenyl)pyruvate + O2 = homogentisate + CO2. It functions in the pathway amino-acid degradation; L-phenylalanine degradation; acetoacetate and fumarate from L-phenylalanine: step 3/6. This Aspergillus fumigatus (strain ATCC MYA-4609 / CBS 101355 / FGSC A1100 / Af293) (Neosartorya fumigata) protein is Probable 4-hydroxyphenylpyruvate dioxygenase 2.